The chain runs to 101 residues: Small ribosomal subunit protein uS14 (101 aa).

This sequence belongs to the universal ribosomal protein uS14 family. Part of the 30S ribosomal subunit. Contacts proteins S3 and S10.

In terms of biological role, binds 16S rRNA, required for the assembly of 30S particles and may also be responsible for determining the conformation of the 16S rRNA at the A site. In Methylobacterium sp. (strain 4-46), this protein is Small ribosomal subunit protein uS14.